We begin with the raw amino-acid sequence, 237 residues long: Deoxyribose-phosphate aldolase (237 aa).

The active-site Proton donor/acceptor is the Asp-94. The active-site Schiff-base intermediate with acetaldehyde is Lys-158. Catalysis depends on Lys-187, which acts as the Proton donor/acceptor.

It belongs to the DeoC/FbaB aldolase family. DeoC type 1 subfamily.

It is found in the cytoplasm. It catalyses the reaction 2-deoxy-D-ribose 5-phosphate = D-glyceraldehyde 3-phosphate + acetaldehyde. It functions in the pathway carbohydrate degradation; 2-deoxy-D-ribose 1-phosphate degradation; D-glyceraldehyde 3-phosphate and acetaldehyde from 2-deoxy-alpha-D-ribose 1-phosphate: step 2/2. Functionally, catalyzes a reversible aldol reaction between acetaldehyde and D-glyceraldehyde 3-phosphate to generate 2-deoxy-D-ribose 5-phosphate. The protein is Deoxyribose-phosphate aldolase of Lactobacillus acidophilus (strain ATCC 700396 / NCK56 / N2 / NCFM).